The sequence spans 811 residues: tRNA(Met) cytidine acetyltransferase TmcA (811 aa).

ATP is bound by residues glutamine 267 and arginine 440. The region spanning 474–663 is the N-acetyltransferase domain; sequence RKEVYLEEPD…GEFTAIVLKP (190 aa). Acetyl-CoA-binding positions include 590-592, glutamate 630, and arginine 637; that span reads IAT.

It belongs to the TmcA family.

The protein localises to the cytoplasm. It carries out the reaction cytidine(34) in elongator tRNA(Met) + acetyl-CoA + ATP + H2O = N(4)-acetylcytidine(34) in elongator tRNA(Met) + ADP + phosphate + CoA + H(+). The catalysed reaction is a cytidine in RNA + acetyl-CoA + ATP + H2O = an N(4)-acetylcytidine in RNA + ADP + phosphate + CoA + H(+). The enzyme catalyses a cytidine in tRNA + acetyl-CoA + ATP + H2O = an N(4)-acetylcytidine in tRNA + ADP + phosphate + CoA + H(+). It catalyses the reaction a cytidine in mRNA + acetyl-CoA + ATP + H2O = an N(4)-acetylcytidine in mRNA + ADP + phosphate + CoA + H(+). Functionally, catalyzes the formation of N(4)-acetylcytidine (ac(4)C) at the wobble position of tRNA(Met), by using acetyl-CoA as an acetyl donor and ATP (or GTP). In terms of biological role, catalyzes the formation of 404 N(4)-acetylcytidine (ac(4)C) sites in RNA, almost always on the middle C of a CCG motif. There 173 ac(4)C sites in rRNA, 35 in non-coding (nc)RNA, 119 in mRNA and 77 in tRNA. More acetylation is observed at 85 and 95 than at 65 or 75 degrees Celsius. In Thermococcus kodakarensis (strain ATCC BAA-918 / JCM 12380 / KOD1) (Pyrococcus kodakaraensis (strain KOD1)), this protein is tRNA(Met) cytidine acetyltransferase TmcA.